We begin with the raw amino-acid sequence, 216 residues long: Ribosomal RNA small subunit methyltransferase G (216 aa).

Positions 75, 80, and 141 each coordinate S-adenosyl-L-methionine.

Belongs to the methyltransferase superfamily. RNA methyltransferase RsmG family.

It localises to the cytoplasm. The catalysed reaction is guanosine(527) in 16S rRNA + S-adenosyl-L-methionine = N(7)-methylguanosine(527) in 16S rRNA + S-adenosyl-L-homocysteine. Specifically methylates the N7 position of guanine in position 527 of 16S rRNA. This is Ribosomal RNA small subunit methyltransferase G from Nitrosospira multiformis (strain ATCC 25196 / NCIMB 11849 / C 71).